The chain runs to 236 residues: Potassium/proton antiporter CemA (236 aa).

A run of 4 helical transmembrane segments spans residues 18 to 38 (YIIS…FLVL), 114 to 134 (IAHV…LINA), 161 to 181 (LILF…KILI), and 196 to 216 (FIFL…KYWI).

The protein belongs to the CemA family.

The protein resides in the plastid. The protein localises to the chloroplast inner membrane. It catalyses the reaction K(+)(in) + H(+)(out) = K(+)(out) + H(+)(in). In terms of biological role, contributes to K(+)/H(+) antiport activity by supporting proton efflux to control proton extrusion and homeostasis in chloroplasts in a light-dependent manner to modulate photosynthesis. Prevents excessive induction of non-photochemical quenching (NPQ) under continuous-light conditions. Indirectly promotes efficient inorganic carbon uptake into chloroplasts. This Mesostigma viride (Green alga) protein is Potassium/proton antiporter CemA.